Reading from the N-terminus, the 218-residue chain is 3,4-dihydroxy-2-butanone 4-phosphate synthase (218 aa).

D-ribulose 5-phosphate-binding positions include 38 to 39, Asp-43, 151 to 155, and Glu-175; these read RE and RRGHT. Glu-39 is a Mg(2+) binding site. His-154 is a binding site for Mg(2+).

The protein belongs to the DHBP synthase family. Homodimer. Mg(2+) is required as a cofactor. It depends on Mn(2+) as a cofactor.

The enzyme catalyses D-ribulose 5-phosphate = (2S)-2-hydroxy-3-oxobutyl phosphate + formate + H(+). It participates in cofactor biosynthesis; riboflavin biosynthesis; 2-hydroxy-3-oxobutyl phosphate from D-ribulose 5-phosphate: step 1/1. Functionally, catalyzes the conversion of D-ribulose 5-phosphate to formate and 3,4-dihydroxy-2-butanone 4-phosphate. This Vibrio vulnificus (strain CMCP6) protein is 3,4-dihydroxy-2-butanone 4-phosphate synthase.